Consider the following 389-residue polypeptide: Phospho-N-acetylmuramoyl-pentapeptide-transferase (389 aa).

A run of 10 helical transmembrane segments spans residues 25-45, 73-93, 97-117, 135-155, 190-210, 222-242, 259-279, 287-307, 311-331, and 366-386; these read RAVM…PAVI, TMGG…WADL, FIWI…VDDY, FWQS…VSEA, ISYP…IVGA, GLVI…AYVM, AGEL…FLWF, FMGD…AVIV, IVLF…MLQV, and QVVV…LSTL.

It belongs to the glycosyltransferase 4 family. MraY subfamily. It depends on Mg(2+) as a cofactor.

The protein localises to the cell inner membrane. The catalysed reaction is UDP-N-acetyl-alpha-D-muramoyl-L-alanyl-gamma-D-glutamyl-meso-2,6-diaminopimeloyl-D-alanyl-D-alanine + di-trans,octa-cis-undecaprenyl phosphate = di-trans,octa-cis-undecaprenyl diphospho-N-acetyl-alpha-D-muramoyl-L-alanyl-D-glutamyl-meso-2,6-diaminopimeloyl-D-alanyl-D-alanine + UMP. The protein operates within cell wall biogenesis; peptidoglycan biosynthesis. Catalyzes the initial step of the lipid cycle reactions in the biosynthesis of the cell wall peptidoglycan: transfers peptidoglycan precursor phospho-MurNAc-pentapeptide from UDP-MurNAc-pentapeptide onto the lipid carrier undecaprenyl phosphate, yielding undecaprenyl-pyrophosphoryl-MurNAc-pentapeptide, known as lipid I. The protein is Phospho-N-acetylmuramoyl-pentapeptide-transferase of Paraburkholderia xenovorans (strain LB400).